Here is a 100-residue protein sequence, read N- to C-terminus: Large ribosomal subunit protein uL23 (100 aa).

The protein belongs to the universal ribosomal protein uL23 family. As to quaternary structure, part of the 50S ribosomal subunit. Contacts protein L29, and trigger factor when it is bound to the ribosome.

Functionally, one of the early assembly proteins it binds 23S rRNA. One of the proteins that surrounds the polypeptide exit tunnel on the outside of the ribosome. Forms the main docking site for trigger factor binding to the ribosome. The sequence is that of Large ribosomal subunit protein uL23 from Aeromonas salmonicida (strain A449).